We begin with the raw amino-acid sequence, 1137 residues long: Otoancorin (1137 aa).

Residues 1 to 23 (MSQGPRTCSLLLVLLLSHGGAYQ) form the signal peptide. 11 N-linked (GlcNAc...) asparagine glycosylation sites follow: N156, N211, N244, N289, N321, N380, N384, N530, N594, N740, and N798. A compositionally biased stretch (polar residues) spans 1095-1115 (HSWQTDPLSSSPTWPASTGSP). Residues 1095-1119 (HSWQTDPLSSSPTWPASTGSPTGEP) form a disordered region. G1113 carries the GPI-anchor amidated glycine lipid modification. A propeptide spans 1114–1137 (SPTGEPASQALWLGCTLLLLTAKS) (removed in mature form).

The protein belongs to the stereocilin family. In terms of tissue distribution, expressed in the inner ear and vestibule.

The protein resides in the apical cell membrane. It localises to the secreted. The protein localises to the extracellular space. Its subcellular location is the extracellular matrix. Functionally, may act as an adhesion molecule. The chain is Otoancorin (Otoa) from Mus musculus (Mouse).